We begin with the raw amino-acid sequence, 97 residues long: MKIEHYIILMVILVGFVTMPLLIPTIKTTQTYSIFNTQENGCSNFLKLMHNSNTIKPLIYPYSNLRDNSILFIIGPDVEFSEDEGHLLRNYVYAGNI.

This is an uncharacterized protein from Methanothermococcus thermolithotrophicus (Methanococcus thermolithotrophicus).